The chain runs to 384 residues: tRNA-specific 2-thiouridylase MnmA (384 aa).

ATP-binding positions include 13–20 (GLSGGVDS) and Met39. Residues 99 to 101 (NPD) are interaction with target base in tRNA. Cys104 acts as the Nucleophile in catalysis. A disulfide bridge links Cys104 with Cys215. Position 128 (Gly128) interacts with ATP. The interval 165-167 (KDQ) is interaction with tRNA. Residue Cys215 is the Cysteine persulfide intermediate of the active site. Residues 333–334 (RY) form an interaction with tRNA region.

This sequence belongs to the MnmA/TRMU family.

It is found in the cytoplasm. The enzyme catalyses S-sulfanyl-L-cysteinyl-[protein] + uridine(34) in tRNA + AH2 + ATP = 2-thiouridine(34) in tRNA + L-cysteinyl-[protein] + A + AMP + diphosphate + H(+). Its function is as follows. Catalyzes the 2-thiolation of uridine at the wobble position (U34) of tRNA, leading to the formation of s(2)U34. This chain is tRNA-specific 2-thiouridylase MnmA, found in Albidiferax ferrireducens (strain ATCC BAA-621 / DSM 15236 / T118) (Rhodoferax ferrireducens).